The following is a 154-amino-acid chain: Protein X (154 aa).

The tract at residues proline 68–phenylalanine 117 is mitochondrial targeting sequence.

This sequence belongs to the orthohepadnavirus protein X family. In terms of assembly, may form homodimer. May interact with host CEBPA, CFLAR, CREB1, DDB1, E4F1, HBXIP, HSPD1/HSP60, NFKBIA, POLR2E and SMAD4. Interacts with host SMC5-SMC6 complex and induces its degradation. Interacts with host TRPC4AP; leading to prevent ubiquitination of TRPC4AP. Interacts with host PLSCR1; this interaction promotes ubiquitination and degradation of HBx and impairs HBx-mediated cell proliferation. Post-translationally, a fraction may be phosphorylated in insect cells and HepG2 cells, a human hepatoblastoma cell line. Phosphorylated in vitro by host protein kinase C or mitogen-activated protein kinase. N-acetylated in insect cells.

It localises to the host cytoplasm. The protein resides in the host nucleus. Its subcellular location is the host mitochondrion. Functionally, multifunctional protein that plays a role in silencing host antiviral defenses and promoting viral transcription. Does not seem to be essential for HBV infection. May be directly involved in development of cirrhosis and liver cancer (hepatocellular carcinoma). Most of cytosolic activities involve modulation of cytosolic calcium. The effect on apoptosis is controversial depending on the cell types in which the studies have been conducted. May induce apoptosis by localizing in mitochondria and causing loss of mitochondrial membrane potential. May also modulate apoptosis by binding host CFLAR, a key regulator of the death-inducing signaling complex (DISC). Promotes viral transcription by using the host E3 ubiquitin ligase DDB1 to target the SMC5-SMC6 complex to proteasomal degradation. This host complex would otherwise bind to viral episomal DNA, and prevents its transcription. Moderately stimulates transcription of many different viral and cellular transcription elements. Promoters and enhancers stimulated by HBx contain DNA binding sites for NF-kappa-B, AP-1, AP-2, c-EBP, ATF/CREB, or the calcium-activated factor NF-AT. This chain is Protein X, found in Homo sapiens (Human).